Reading from the N-terminus, the 20-residue chain is Luminal-binding protein (20 aa).

It belongs to the heat shock protein 70 family.

Its subcellular location is the endoplasmic reticulum lumen. In terms of biological role, probably plays a role in facilitating the assembly of multimeric protein complexes inside the ER. The sequence is that of Luminal-binding protein from Phaseolus vulgaris (Kidney bean).